Here is a 157-residue protein sequence, read N- to C-terminus: Transcription elongation factor GreA (157 aa).

The protein belongs to the GreA/GreB family.

Necessary for efficient RNA polymerase transcription elongation past template-encoded arresting sites. The arresting sites in DNA have the property of trapping a certain fraction of elongating RNA polymerases that pass through, resulting in locked ternary complexes. Cleavage of the nascent transcript by cleavage factors such as GreA or GreB allows the resumption of elongation from the new 3'terminus. GreA releases sequences of 2 to 3 nucleotides. In Bartonella tribocorum (strain CIP 105476 / IBS 506), this protein is Transcription elongation factor GreA.